A 366-amino-acid polypeptide reads, in one-letter code: Leucine dehydrogenase (366 aa).

The active site involves Lys80. 180–186 (GVGHVAY) is a binding site for NAD(+).

Belongs to the Glu/Leu/Phe/Val dehydrogenases family. As to quaternary structure, homooctamer.

The enzyme catalyses L-leucine + NAD(+) + H2O = 4-methyl-2-oxopentanoate + NH4(+) + NADH + H(+). The protein operates within amino-acid degradation; L-leucine degradation; 4-methyl-2-oxopentanoate from L-leucine (dehydrogenase route): step 1/1. Inhibited by pyridoxal phosphate. Functionally, catalyzes the reversible deamination of L-leucine to 4-methyl-2-oxopentanoate. Exhibits the highest activity with L-leucine as substrate, but can also use other L-amino acids such as L-isoleucine, L-valine and L-2-aminovaleric acid. All of the oxo analogs of the amino acid substrates serve as good substrates for the reverse reaction. The sequence is that of Leucine dehydrogenase (ldh) from Thermoactinomyces intermedius.